The primary structure comprises 730 residues: Ribosomal RNA large subunit methyltransferase K/L (730 aa).

The region spanning 46–157 (TAYRLCVWSR…RGEAILSLDL (112 aa)) is the THUMP domain. Positions 395 to 418 (ERREAQPEGTEVRQQAPQASEPAR) are disordered.

Belongs to the methyltransferase superfamily. RlmKL family.

The protein localises to the cytoplasm. It catalyses the reaction guanosine(2445) in 23S rRNA + S-adenosyl-L-methionine = N(2)-methylguanosine(2445) in 23S rRNA + S-adenosyl-L-homocysteine + H(+). It carries out the reaction guanosine(2069) in 23S rRNA + S-adenosyl-L-methionine = N(2)-methylguanosine(2069) in 23S rRNA + S-adenosyl-L-homocysteine + H(+). Its function is as follows. Specifically methylates the guanine in position 2445 (m2G2445) and the guanine in position 2069 (m7G2069) of 23S rRNA. This is Ribosomal RNA large subunit methyltransferase K/L from Pseudomonas putida (strain GB-1).